The following is a 97-amino-acid chain: Small ribosomal subunit protein bS18c (97 aa).

The protein belongs to the bacterial ribosomal protein bS18 family. As to quaternary structure, part of the 30S ribosomal subunit.

It is found in the plastid. The protein localises to the chloroplast. The polypeptide is Small ribosomal subunit protein bS18c (Oenothera glazioviana (Large-flowered evening primrose)).